A 462-amino-acid polypeptide reads, in one-letter code: Putative E3 ubiquitin-protein ligase XBAT35 (462 aa).

ANK repeat units lie at residues 6 to 35, 39 to 69, and 75 to 104; these read SKGE…DLEW, EGKT…NVNA, and HAGT…NPLV. 2 disordered regions span residues 277-341 and 356-402; these read HPPV…GKAS and SSPS…EGER. Residues 304 to 317 show a composition bias toward polar residues; that stretch reads SLHTTMSDPSNLNH. Low complexity predominate over residues 319–341; that stretch reads SIGQASSSSGPSSSTAPPSGKAS. An RING-type zinc finger spans residues 411–450; the sequence is CAICLDAPSEAVCVPCGHVAGCMSCLKEIKSKNWGCPVCR.

The enzyme catalyses S-ubiquitinyl-[E2 ubiquitin-conjugating enzyme]-L-cysteine + [acceptor protein]-L-lysine = [E2 ubiquitin-conjugating enzyme]-L-cysteine + N(6)-ubiquitinyl-[acceptor protein]-L-lysine.. It participates in protein modification; protein ubiquitination. No E3 ubiquitin-protein ligase activity observed when associated with the E2 enzyme UBC8 in vitro. The chain is Putative E3 ubiquitin-protein ligase XBAT35 (XBAT35) from Arabidopsis thaliana (Mouse-ear cress).